The sequence spans 99 residues: Large ribosomal subunit protein uL23 (99 aa).

Belongs to the universal ribosomal protein uL23 family. Part of the 50S ribosomal subunit. Contacts protein L29, and trigger factor when it is bound to the ribosome.

Functionally, one of the early assembly proteins it binds 23S rRNA. One of the proteins that surrounds the polypeptide exit tunnel on the outside of the ribosome. Forms the main docking site for trigger factor binding to the ribosome. The chain is Large ribosomal subunit protein uL23 from Rhodopseudomonas palustris (strain BisB18).